Consider the following 342-residue polypeptide: MESLNVNAKNWKALIKPAQLDVKISDDKSHAKIIAEPLEKGYGLTLGNSLRRILLSSIRGAAVTSIQIDGVLHEFTSIKGVREDVTDIVLNVKSLALKSSSETTKKLILDAKGPGEIKASDIAPVADIEILNPDLVICNLDENTHFHMEMNVGTGKGYVPAVMNKPEEPPLGLIAIDSLYSPVKKVSYSISTAREGKALDYDKLIMEVETNGSISAEDAVAYSARIFQDQLNMFVNFDEPVEVPVKEVSSEPEFNKNLLRKVDELELSVRSMNCLKNDNIIYIGDLVQKSEGEMLRTPNFGRKSLNEIKEVLTGMSLYLGMEIPNWPPENIAEMSKKLEEQI.

Positions 1–238 (MESLNVNAKN…DQLNMFVNFD (238 aa)) are alpha N-terminal domain (alpha-NTD). The segment at 254 to 342 (FNKNLLRKVD…EMSKKLEEQI (89 aa)) is alpha C-terminal domain (alpha-CTD).

This sequence belongs to the RNA polymerase alpha chain family. In terms of assembly, homodimer. The RNAP catalytic core consists of 2 alpha, 1 beta, 1 beta' and 1 omega subunit. When a sigma factor is associated with the core the holoenzyme is formed, which can initiate transcription.

It carries out the reaction RNA(n) + a ribonucleoside 5'-triphosphate = RNA(n+1) + diphosphate. Functionally, DNA-dependent RNA polymerase catalyzes the transcription of DNA into RNA using the four ribonucleoside triphosphates as substrates. This Pelagibacter ubique (strain HTCC1062) protein is DNA-directed RNA polymerase subunit alpha.